The primary structure comprises 547 residues: Sodium-coupled neutral amino acid transporter 4 (547 aa).

The tract at residues 1–26 (MDPMELRNVNIEPDDESSSGESVPDS) is disordered. At 1-104 (MDPMELRNVN…GLSYAMANTG (104 aa)) the chain is on the extracellular side. A Phosphoserine modification is found at Ser49. Residues 105-125 (IILFIIMLLAVAILSLYSVHL) form a helical membrane-spanning segment. Residues 126-151 (LLKTAKEGGSLIYEKLGEKAFGWPGK) are Cytoplasmic-facing. Residues 152-172 (IGAFISITMQNIGAMSSYLFI) form a helical membrane-spanning segment. At 173-195 (IKYELPEVIRAFMGLEENTGEWY) the chain is on the extracellular side. The chain crosses the membrane as a helical span at residues 196 to 216 (PNGNYLIVFVSLGIILPLSLL). Residues 217–220 (KNLG) are Cytoplasmic-facing. Residues 221-241 (YLGYTSGFSLTCMVFFVSVVI) traverse the membrane as a helical segment. Residues 242 to 332 (YKKFQIPCPL…PKYFVFNSRT (91 aa)) lie on the Extracellular side of the membrane. Cys249 and Cys321 are disulfide-bonded. Asn260, Asn264, and Asn276 each carry an N-linked (GlcNAc...) asparagine glycan. The chain crosses the membrane as a helical span at residues 333–353 (AYAIPILAFAFVCHPEVLPIY). The Cytoplasmic segment spans residues 354–369 (SELKDRSRRKMQTVSN). Residues 370-390 (ISITGMLVMYLLAALFGYLTF) traverse the membrane as a helical segment. Topologically, residues 391–411 (YGEVEDELLHAYSKVYTFDIP) are extracellular. The chain crosses the membrane as a helical span at residues 412–432 (LLMVRLAVLVAVTLTVPIVLF). Over 433–453 (PIRTSVTTLLFPKRPFSWIRH) the chain is Cytoplasmic. A helical membrane pass occupies residues 454 to 474 (FLIAAVLIALNNVLVILVPTI). Over 475-476 (KY) the chain is Extracellular. A helical membrane pass occupies residues 477–497 (IFGFIGASSATMLIFILPAVF). The Cytoplasmic segment spans residues 498–514 (YLKLVKKESFRSPQKVG). A helical membrane pass occupies residues 515–535 (ALIFLVVGIIFMIGSMALIII). Topologically, residues 536-547 (DWIYDPPNSKHH) are extracellular.

The protein belongs to the amino acid/polyamine transporter 2 family. The disulfide bond plays an important role in substrate transport, but has no effect on trafficking to the cell surface.

It localises to the cell membrane. It is found in the cell projection. The protein localises to the microvillus membrane. It carries out the reaction L-methionine(in) + Na(+)(in) = L-methionine(out) + Na(+)(out). The enzyme catalyses L-asparagine(in) + Na(+)(in) = L-asparagine(out) + Na(+)(out). The catalysed reaction is L-threonine(in) + Na(+)(in) = L-threonine(out) + Na(+)(out). It catalyses the reaction L-serine(in) + Na(+)(in) = L-serine(out) + Na(+)(out). It carries out the reaction glycine(in) + Na(+)(in) = glycine(out) + Na(+)(out). The enzyme catalyses L-alanine(in) + Na(+)(in) = L-alanine(out) + Na(+)(out). The catalysed reaction is L-glutamine(in) + Na(+)(in) = L-glutamine(out) + Na(+)(out). It catalyses the reaction L-histidine(in) + Na(+)(in) = L-histidine(out) + Na(+)(out). It carries out the reaction L-cysteine(in) + Na(+)(in) = L-cysteine(out) + Na(+)(out). The enzyme catalyses L-proline(in) + Na(+)(in) = L-proline(out) + Na(+)(out). Symporter that cotransports neutral amino acids and sodium ions from the extraccellular to the intracellular side of the cell membrane. The transport is electrogenic, pH dependent and partially tolerates substitution of Na(+) by Li(+). Preferentially transports smaller amino acids, such as glycine, L-alanine, L-serine, L-asparagine and L-threonine, followed by L-cysteine, L-histidine, L-proline and L-glutamine and L-methionine. This Pongo abelii (Sumatran orangutan) protein is Sodium-coupled neutral amino acid transporter 4.